Reading from the N-terminus, the 577-residue chain is Probable L-gulonolactone oxidase 4 (577 aa).

Residues 1–17 (MSFWLSLIFCFFTFASS) form the signal peptide. An FAD-binding PCMH-type domain is found at 46–228 (SICKAAKVEY…SQVTFELQPM (183 aa)).

It belongs to the oxygen-dependent FAD-linked oxidoreductase family. It depends on FAD as a cofactor.

The enzyme catalyses L-gulono-1,4-lactone + O2 = L-ascorbate + H2O2 + H(+). It functions in the pathway cofactor biosynthesis; L-ascorbate biosynthesis. In terms of biological role, may be involved in the biosynthesis of ascorbic acid. The sequence is that of Probable L-gulonolactone oxidase 4 from Arabidopsis thaliana (Mouse-ear cress).